The following is a 127-amino-acid chain: Major sperm protein 152 (127 aa).

Thr2 carries the N-acetylthreonine modification. The MSP domain maps to 9–126 (DIQTQPGTKI…RRKNLPIEYN (118 aa)).

As to expression, sperm.

It localises to the cell projection. The protein localises to the pseudopodium. Its subcellular location is the cytoplasm. The protein resides in the cytoskeleton. Central component in molecular interactions underlying sperm crawling. Forms an extensive filament system that extends from sperm villipoda, along the leading edge of the pseudopod. This Caenorhabditis elegans protein is Major sperm protein 152 (msp-152).